The chain runs to 206 residues: Ribosomal RNA large subunit methyltransferase E (206 aa).

Positions 60, 62, 80, 96, and 121 each coordinate S-adenosyl-L-methionine. Catalysis depends on K161, which acts as the Proton acceptor.

The protein belongs to the class I-like SAM-binding methyltransferase superfamily. RNA methyltransferase RlmE family.

It localises to the cytoplasm. It carries out the reaction uridine(2552) in 23S rRNA + S-adenosyl-L-methionine = 2'-O-methyluridine(2552) in 23S rRNA + S-adenosyl-L-homocysteine + H(+). Specifically methylates the uridine in position 2552 of 23S rRNA at the 2'-O position of the ribose in the fully assembled 50S ribosomal subunit. This Legionella pneumophila (strain Corby) protein is Ribosomal RNA large subunit methyltransferase E.